The chain runs to 388 residues: Na(+)/H(+) antiporter NhaA (388 aa).

At 1-11 the chain is on the cytoplasmic side; it reads MKHLHRFFSSD. A helical transmembrane segment spans residues 12 to 31; sequence ASGGIILIIAAILAMMMANS. Over 32–58 the chain is Periplasmic; sequence GATSGWYHDFLETPVQLRVGSLEINKN. The helical transmembrane segment at 59-80 threads the bilayer; the sequence is MLLWINDALMAVFFLLVGLEVK. The Cytoplasmic segment spans residues 81 to 96; the sequence is RELMQGSLASLRQAAF. A helical membrane pass occupies residues 97–116; sequence PVIAAIGGMIVPALLYLAFN. Residues 117–122 are Periplasmic-facing; sequence YADPIT. Residues 123 to 130 traverse the membrane as a helical segment; it reads REGWAIPA. Residues 131 to 154 lie on the Cytoplasmic side of the membrane; that stretch reads ATDIAFALGVLALLGSRVPLALKI. The chain crosses the membrane as a helical span at residues 155-176; it reads FLMALAIIDDLGAIIIIALFYT. The Periplasmic segment spans residues 177 to 180; that stretch reads NDLS. Residues 181 to 200 traverse the membrane as a helical segment; sequence MASLGVAAVAIAVLAVLNLC. Topologically, residues 201–204 are cytoplasmic; it reads GVRR. Residues 205–222 form a helical membrane-spanning segment; that stretch reads TGVYILVGVVLWTAVLKS. Gly-223 is a topological domain (periplasmic). A helical transmembrane segment spans residues 224 to 236; sequence VHATLAGVIVGFF. Over 237–253 the chain is Cytoplasmic; that stretch reads IPLKEKHGRSTAKRLEH. A helical transmembrane segment spans residues 254–272; that stretch reads VLHPWVAYLILPLFAFANA. Residues 273-286 lie on the Periplasmic side of the membrane; it reads GVSLQGVTLDGLTS. The helical transmembrane segment at 287-310 threads the bilayer; the sequence is ILPLGIIAGLLIGKPLGISLFCWL. Topologically, residues 311 to 339 are cytoplasmic; the sequence is ALRLKLAHLPEGTTYQQIMAVGILCGIGF. A helical transmembrane segment spans residues 340 to 350; that stretch reads TMSIFIASLAF. Over 351 to 357 the chain is Periplasmic; that stretch reads GSVDPEL. Residues 358 to 380 form a helical membrane-spanning segment; sequence INWAKLGILVGSISSAVIGYSWL. Residues 381-388 are Cytoplasmic-facing; that stretch reads RVRLRPSV.

Belongs to the NhaA Na(+)/H(+) (TC 2.A.33) antiporter family.

The protein localises to the cell inner membrane. The enzyme catalyses Na(+)(in) + 2 H(+)(out) = Na(+)(out) + 2 H(+)(in). In terms of biological role, na(+)/H(+) antiporter that extrudes sodium in exchange for external protons. The protein is Na(+)/H(+) antiporter NhaA of Shigella dysenteriae serotype 1 (strain Sd197).